A 295-amino-acid chain; its full sequence is Proline iminopeptidase (295 aa).

Residues Thr35–Asp279 form the AB hydrolase-1 domain. Ser107 serves as the catalytic Nucleophile. Residue Asp246 is part of the active site. His273 acts as the Proton donor in catalysis.

The protein belongs to the peptidase S33 family. In terms of assembly, part of the tricorn proteolytic complex.

It carries out the reaction Release of N-terminal proline from a peptide.. Functionally, cleaves H-Pro-AMC as well as a wide spectrum of amino acid substrates and several peptide substrates without a proline at the N-terminus. In conjunction with the three factors F1, F2 and F3, Tricorn degrades oligopeptides in a sequential manner, yielding free amino acids. This chain is Proline iminopeptidase (pip), found in Thermoplasma volcanium (strain ATCC 51530 / DSM 4299 / JCM 9571 / NBRC 15438 / GSS1).